We begin with the raw amino-acid sequence, 1072 residues long: DNA-directed RNA polymerase subunit beta (1072 aa).

This sequence belongs to the RNA polymerase beta chain family. In terms of assembly, in plastids the minimal PEP RNA polymerase catalytic core is composed of four subunits: alpha, beta, beta', and beta''. When a (nuclear-encoded) sigma factor is associated with the core the holoenzyme is formed, which can initiate transcription.

The protein localises to the plastid. It is found in the chloroplast. It carries out the reaction RNA(n) + a ribonucleoside 5'-triphosphate = RNA(n+1) + diphosphate. Its function is as follows. DNA-dependent RNA polymerase catalyzes the transcription of DNA into RNA using the four ribonucleoside triphosphates as substrates. In Draba nemorosa (Woodland whitlowgrass), this protein is DNA-directed RNA polymerase subunit beta.